A 190-amino-acid chain; its full sequence is Large ribosomal subunit protein bL17 (190 aa).

Residues 128–190 are disordered; it reads KKTAGRKAAQ…VEENNEQNKA (63 aa). Over residues 143–154 the composition is skewed to low complexity; the sequence is ALAPAEETPAPT. Over residues 179–190 the composition is skewed to acidic residues; sequence LAVEENNEQNKA.

Belongs to the bacterial ribosomal protein bL17 family. In terms of assembly, part of the 50S ribosomal subunit. Contacts protein L32.

The sequence is that of Large ribosomal subunit protein bL17 from Salinispora tropica (strain ATCC BAA-916 / DSM 44818 / JCM 13857 / NBRC 105044 / CNB-440).